The sequence spans 220 residues: Small ribosomal subunit protein uS3c (220 aa).

In terms of domain architecture, KH type-2 spans 48–119 (VQKHTNNPFH…KLCLILIKID (72 aa)).

The protein belongs to the universal ribosomal protein uS3 family. In terms of assembly, part of the 30S ribosomal subunit.

The protein localises to the plastid. The protein resides in the chloroplast. The protein is Small ribosomal subunit protein uS3c (rps3) of Psilotum nudum (Whisk fern).